Reading from the N-terminus, the 91-residue chain is Probable Fe(2+)-trafficking protein (91 aa).

This sequence belongs to the Fe(2+)-trafficking protein family.

Could be a mediator in iron transactions between iron acquisition and iron-requiring processes, such as synthesis and/or repair of Fe-S clusters in biosynthetic enzymes. This chain is Probable Fe(2+)-trafficking protein, found in Thiobacillus denitrificans (strain ATCC 25259 / T1).